We begin with the raw amino-acid sequence, 314 residues long: Solute carrier family 25 member 44 (314 aa).

Solcar repeat units follow at residues 18–100 (KKFY…TRKF), 107–210 (SNTV…YAEQ), and 220–302 (PHIV…LKKL). The next 6 membrane-spanning stretches (helical) occupy residues 20–42 (FYVF…TLIR), 71–90 (TGLY…GQCY), 113–133 (LVAG…IDVV), 185–201 (GYVA…AVWW), 222–239 (IVFQ…ASIL), and 278–296 (LSAR…VVGY).

The protein belongs to the mitochondrial carrier (TC 2.A.29) family.

The protein localises to the mitochondrion membrane. The enzyme catalyses L-valine(in) = L-valine(out). It catalyses the reaction L-leucine(in) = L-leucine(out). Functionally, mitochondrial solute transporter which transports branched-chain amino acid (BCAA; valine, leucine and isoleucine) into mitochondria in brown adipose tissue (BAT). BAT is involved in BCAA catabolism and actively utilizes BCAA in the mitochondria for thermogenesis. This chain is Solute carrier family 25 member 44, found in Homo sapiens (Human).